The sequence spans 372 residues: C-X-C chemokine receptor type 5 (372 aa).

Residues 1–55 are Extracellular-facing; the sequence is MNYPLTLEMDLENLEDLFWELDRLDNYNDTSLVENHLCPATEGPLMASFKAVFVP. The N-linked (GlcNAc...) asparagine glycan is linked to Asn28. Residues 56-76 form a helical membrane-spanning segment; it reads VAYSLIFLLGVIGNVLVLVIL. Residues 77-88 lie on the Cytoplasmic side of the membrane; sequence ERHRQTRSSTET. The helical transmembrane segment at 89–109 threads the bilayer; the sequence is FLFHLAVADLLLVFILPFAVA. At 110–124 the chain is on the extracellular side; that stretch reads EGSVGWVLGTFLCKT. An intrachain disulfide couples Cys122 to Cys202. A helical transmembrane segment spans residues 125–145; the sequence is VIALHKVNFYCSSLLLACIAV. The Cytoplasmic portion of the chain corresponds to 146 to 167; sequence DRYLAIVHAVHAYRHRRLLSIH. A helical membrane pass occupies residues 168–188; the sequence is ITCGTIWLVGFLLALPEILFA. Residues 189 to 219 are Extracellular-facing; it reads KVSQGHHNNSLPRCTFSQENQAETHAWFTSR. Asn196 is a glycosylation site (N-linked (GlcNAc...) asparagine). A helical membrane pass occupies residues 220–240; it reads FLYHVAGFLLPMLVMGWCYVG. The Cytoplasmic segment spans residues 241-259; sequence VVHRLRQAQRRPQRQKAVR. A helical membrane pass occupies residues 260 to 280; it reads VAILVTSIFFLCWSPYHIVIF. Residues 281–304 lie on the Extracellular side of the membrane; sequence LDTLARLKAVDNTCKLNGSLPVAI. The helical transmembrane segment at 305-325 threads the bilayer; it reads TMCEFLGLAHCCLNPMLYTFA. Over 326 to 372 the chain is Cytoplasmic; that stretch reads GVKFRSDLSRLLTKLGCTGPASLCQLFPSWRRSSLSESENATSLTTF.

Belongs to the G-protein coupled receptor 1 family. In terms of tissue distribution, expression in mature B-cells and Burkitt lymphoma cells.

It is found in the cell membrane. Cytokine receptor that binds to B-lymphocyte chemoattractant (BLC). Involved in B-cell migration into B-cell follicles of spleen and Peyer patches but not into those of mesenteric or peripheral lymph nodes. May have a regulatory function in Burkitt lymphoma (BL) lymphomagenesis and/or B-cell differentiation. This is C-X-C chemokine receptor type 5 (CXCR5) from Homo sapiens (Human).